The chain runs to 89 residues: Large ribosomal subunit protein bL27 (89 aa).

Residues 1-26 are disordered; it reads MATKKAGGSSKNGRDSAGRRLGLKKT.

Belongs to the bacterial ribosomal protein bL27 family.

The polypeptide is Large ribosomal subunit protein bL27 (Orientia tsutsugamushi (strain Boryong) (Rickettsia tsutsugamushi)).